A 280-amino-acid chain; its full sequence is F-box only protein 27 (280 aa).

Residues 20–67 (VLDLSRLPPELLLLVLSHVPPRTLLMHCRRVCRAWRALVDGQALWLLL) form the F-box domain. The region spanning 101 to 277 (FCALRPLGRN…VTNSSVIIRV (177 aa)) is the FBA domain.

As to quaternary structure, part of a SCF (SKP1-cullin-F-box) protein ligase complex. Interacts with SKP1 and CUL1. Detected in brain, heart and muscle.

In terms of biological role, substrate-recognition component of the SCF (SKP1-CUL1-F-box protein)-type E3 ubiquitin ligase complex. Able to recognize and bind complex-type oligosaccharides. This chain is F-box only protein 27 (Fbxo27), found in Mus musculus (Mouse).